The primary structure comprises 561 residues: BTB/POZ domain-containing protein At2g46260 (561 aa).

Disordered regions lie at residues 1–31 (MRGS…EGDF) and 100–119 (LTDN…NLDD). A compositionally biased stretch (polar residues) spans 17–28 (DSNFSRHGSSSE). The span at 107-119 (DMDDAPGGDNLDD) shows a compositional bias: acidic residues. One can recognise a BTB domain in the interval 143-212 (IDCSTVVRVK…MYSNSLSVTT (70 aa)). A BACK domain is found at 266 to 358 (QPLTDAAKQF…YMTCRKLKKV (93 aa)).

It functions in the pathway protein modification; protein ubiquitination. Its function is as follows. May act as a substrate-specific adapter of an E3 ubiquitin-protein ligase complex (CUL3-RBX1-BTB) which mediates the ubiquitination and subsequent proteasomal degradation of target proteins. The protein is BTB/POZ domain-containing protein At2g46260 of Arabidopsis thaliana (Mouse-ear cress).